The sequence spans 21 residues: MKRISTTITTTITITTGNGAG.

Belongs to the thr operon leader peptide family.

Its function is as follows. This protein is involved in control of the biosynthesis of threonine. The sequence is that of thr operon leader peptide from Shigella boydii serotype 18 (strain CDC 3083-94 / BS512).